The following is a 629-amino-acid chain: tRNA uridine 5-carboxymethylaminomethyl modification enzyme MnmG (629 aa).

FAD-binding positions include 15 to 20 (GAGHAG), V127, and S182. The segment at 203-227 (TPPRVKSSTIDYSKTEEQPGDDHPR) is disordered. Residues 215-227 (SKTEEQPGDDHPR) are compositionally biased toward basic and acidic residues. 274 to 288 (GARYCPSIEDKIVRF) contributes to the NAD(+) binding site. Position 371 (Q371) interacts with FAD.

Belongs to the MnmG family. Homodimer. Heterotetramer of two MnmE and two MnmG subunits. FAD is required as a cofactor.

It localises to the cytoplasm. Its function is as follows. NAD-binding protein involved in the addition of a carboxymethylaminomethyl (cmnm) group at the wobble position (U34) of certain tRNAs, forming tRNA-cmnm(5)s(2)U34. This is tRNA uridine 5-carboxymethylaminomethyl modification enzyme MnmG from Listeria welshimeri serovar 6b (strain ATCC 35897 / DSM 20650 / CCUG 15529 / CIP 8149 / NCTC 11857 / SLCC 5334 / V8).